A 256-amino-acid chain; its full sequence is Glutamate racemase (256 aa).

Substrate contacts are provided by residues 11–12 (DS) and 43–44 (YG). Cys-74 acts as the Proton donor/acceptor in catalysis. A substrate-binding site is contributed by 75-76 (NT). Cys-182 serves as the catalytic Proton donor/acceptor. 183–184 (TH) lines the substrate pocket.

The protein belongs to the aspartate/glutamate racemases family.

It carries out the reaction L-glutamate = D-glutamate. The protein operates within cell wall biogenesis; peptidoglycan biosynthesis. Functionally, provides the (R)-glutamate required for cell wall biosynthesis. This Leptospira interrogans serogroup Icterohaemorrhagiae serovar copenhageni (strain Fiocruz L1-130) protein is Glutamate racemase.